The sequence spans 92 residues: Acylphosphatase (92 aa).

The 88-residue stretch at 5–92 (RVKVKVNGRV…GVFERFEVRF (88 aa)) folds into the Acylphosphatase-like domain. Catalysis depends on residues Arg-20 and Asn-38.

This sequence belongs to the acylphosphatase family.

The enzyme catalyses an acyl phosphate + H2O = a carboxylate + phosphate + H(+). This Syntrophotalea carbinolica (strain DSM 2380 / NBRC 103641 / GraBd1) (Pelobacter carbinolicus) protein is Acylphosphatase (acyP).